A 638-amino-acid polypeptide reads, in one-letter code: 1-deoxy-D-xylulose-5-phosphate synthase (638 aa).

Thiamine diphosphate contacts are provided by residues H72 and G113–A115. Residue D144 participates in Mg(2+) binding. Residues G145–A146, N174, Y287, and E370 each bind thiamine diphosphate. Position 174 (N174) interacts with Mg(2+).

Belongs to the transketolase family. DXPS subfamily. Homodimer. It depends on Mg(2+) as a cofactor. Thiamine diphosphate is required as a cofactor.

It carries out the reaction D-glyceraldehyde 3-phosphate + pyruvate + H(+) = 1-deoxy-D-xylulose 5-phosphate + CO2. The protein operates within metabolic intermediate biosynthesis; 1-deoxy-D-xylulose 5-phosphate biosynthesis; 1-deoxy-D-xylulose 5-phosphate from D-glyceraldehyde 3-phosphate and pyruvate: step 1/1. Catalyzes the acyloin condensation reaction between C atoms 2 and 3 of pyruvate and glyceraldehyde 3-phosphate to yield 1-deoxy-D-xylulose-5-phosphate (DXP). This Picosynechococcus sp. (strain ATCC 27264 / PCC 7002 / PR-6) (Agmenellum quadruplicatum) protein is 1-deoxy-D-xylulose-5-phosphate synthase.